The chain runs to 154 residues: Lipoprotein signal peptidase (154 aa).

Helical transmembrane passes span 8–28 (AFFLISVACFLADYYSKYWAL), 36–56 (IVVNTYMNFILAFNHGAAFSF), 66–86 (WLFAGFAGIVALWLIMTLLTK), and 88–108 (HHWLMSVSYACILGGAVGNLY). Residues Asp-118 and Asp-136 contribute to the active site. A helical transmembrane segment spans residues 129 to 149 (WPVFNLADVAITLGVILMLIA).

Belongs to the peptidase A8 family.

It is found in the cell inner membrane. It carries out the reaction Release of signal peptides from bacterial membrane prolipoproteins. Hydrolyzes -Xaa-Yaa-Zaa-|-(S,diacylglyceryl)Cys-, in which Xaa is hydrophobic (preferably Leu), and Yaa (Ala or Ser) and Zaa (Gly or Ala) have small, neutral side chains.. Its pathway is protein modification; lipoprotein biosynthesis (signal peptide cleavage). This protein specifically catalyzes the removal of signal peptides from prolipoproteins. The chain is Lipoprotein signal peptidase from Dichelobacter nodosus (strain VCS1703A).